Reading from the N-terminus, the 241-residue chain is Small ribosomal subunit protein uS10m (241 aa).

A mitochondrion-targeting transit peptide spans 1–54 (MIAGVLRRSSLPSRQTLSAALASFNSCISHNLTPATTGASVSSRFTLASSPNSF).

This sequence belongs to the universal ribosomal protein uS10 family. In terms of assembly, component of the mitochondrial ribosome small subunit.

Its subcellular location is the mitochondrion. The polypeptide is Small ribosomal subunit protein uS10m (RPS10) (Arabidopsis thaliana (Mouse-ear cress)).